We begin with the raw amino-acid sequence, 503 residues long: Aromatase (503 aa).

Residue Cys437 coordinates heme.

It belongs to the cytochrome P450 family. It depends on heme as a cofactor.

The protein resides in the membrane. It carries out the reaction testosterone + 3 reduced [NADPH--hemoprotein reductase] + 3 O2 = 17beta-estradiol + formate + 3 oxidized [NADPH--hemoprotein reductase] + 4 H2O + 4 H(+). The enzyme catalyses androst-4-ene-3,17-dione + 3 reduced [NADPH--hemoprotein reductase] + 3 O2 = estrone + formate + 3 oxidized [NADPH--hemoprotein reductase] + 4 H2O + 4 H(+). In terms of biological role, catalyzes the formation of aromatic C18 estrogens from C19 androgens. This chain is Aromatase (CYP19A1), found in Oryctolagus cuniculus (Rabbit).